A 162-amino-acid polypeptide reads, in one-letter code: UPF0262 protein Pden_1958 (162 aa).

A disordered region spans residues M1 to S22.

This sequence belongs to the UPF0262 family.

The polypeptide is UPF0262 protein Pden_1958 (Paracoccus denitrificans (strain Pd 1222)).